The following is a 270-amino-acid chain: Lipopolysaccharide core biosynthesis glycosyltransferase LpsC (270 aa).

Belongs to the glycosyltransferase 2 family. WaaE/KdtX subfamily.

It participates in bacterial outer membrane biogenesis; LPS core biosynthesis. The protein is Lipopolysaccharide core biosynthesis glycosyltransferase LpsC (lpsC) of Rhizobium meliloti (strain 1021) (Ensifer meliloti).